The primary structure comprises 223 residues: tRNA (guanine-N(7)-)-methyltransferase (223 aa).

S-adenosyl-L-methionine is bound by residues glutamate 45, glutamate 70, and aspartate 125. Aspartate 125 is an active-site residue. Substrate is bound by residues lysine 129, aspartate 161, and 201–204; that span reads TEYE.

The protein belongs to the class I-like SAM-binding methyltransferase superfamily. TrmB family.

It catalyses the reaction guanosine(46) in tRNA + S-adenosyl-L-methionine = N(7)-methylguanosine(46) in tRNA + S-adenosyl-L-homocysteine. The protein operates within tRNA modification; N(7)-methylguanine-tRNA biosynthesis. Its function is as follows. Catalyzes the formation of N(7)-methylguanine at position 46 (m7G46) in tRNA. This is tRNA (guanine-N(7)-)-methyltransferase from Mesoplasma florum (strain ATCC 33453 / NBRC 100688 / NCTC 11704 / L1) (Acholeplasma florum).